A 397-amino-acid chain; its full sequence is MERQKKKDMDFLTEDLWEIILARLPLKSIITTPKLVCKVWKSIIESRCFRDLFQSLHQNSHHSSWSLMCRGCETEIMSHYGSDNWNLNHSLGYYISSFLTDKFENYNEARVVSYTDVGLILVHRVSSQSFYVANPVSRQCVEILPSQKLDCFWILGIATRVENGVVLGYKVVLLKPNFTFLIYSSETGLWSLNSDTFPFSYISQEFNNPISLNGSLYWLAHGSEYQDFIVSIDFYVVDSRSDRCRATPFPDLDKVPKFRRTCTTSQGCLMYMNIFSIPKVDGNLEDKLCVWRLESWQWRLVFEISLDSIKTGFDYIPLGTDPFDAKTVYLWSRKCLLSINLHNGDIVLHKDVEHSSAGRILNSVDCPRDMTYILESNFASFVLPQWMHPFPSTVRSV.

One can recognise an F-box domain in the interval 6 to 56 (KKDMDFLTEDLWEIILARLPLKSIITTPKLVCKVWKSIIESRCFRDLFQSL).

This Arabidopsis thaliana (Mouse-ear cress) protein is F-box protein At3g28330.